The chain runs to 1023 residues: 2-oxoglutarate dehydrogenase complex component E1 (1023 aa).

Residues 1 to 40 constitute a mitochondrion transit peptide; the sequence is MFHLRTCAAKLRPLTASQTVKTFSQNRPAAARTFQQIRCY. Lys-74 carries the post-translational modification N6-succinyllysine. Residue Ser-100 is modified to Phosphoserine. Positions 143, 156, and 158 each coordinate Ca(2+). Arg-312 contacts thiamine diphosphate. Lys-401 is modified (N6-acetyllysine). Thiamine diphosphate contacts are provided by Asp-411, Asn-444, and Ile-446. Mg(2+)-binding residues include Asp-411, Asn-444, and Ile-446. Residue Lys-534 forms a Glycyl lysine isopeptide (Lys-Gly) (interchain with G-Cter in ubiquitin) linkage. Lys-564 carries the post-translational modification N6-succinyllysine. Position 676 (Gln-676) interacts with thiamine diphosphate. Lys-970 bears the N6-acetyllysine mark.

Belongs to the alpha-ketoglutarate dehydrogenase family. As to quaternary structure, homodimer. The 2-oxoglutarate dehydrogenase complex is composed of OGDH (2-oxoglutarate dehydrogenase; E1), DLST (dihydrolipoamide succinyltransferase; E2), DLD (dihydrolipoamide dehydrogenase; E3) and the assembly factor KGD4. It contains multiple copies of the three enzymatic components (E1, E2 and E3). In the nucleus, the 2-oxoglutarate dehydrogenase complex associates with KAT2A. Interacts with ABHD11; this interaction maintains the functional lipoylation of the 2-oxoglutarate dehydrogenase complex. Requires thiamine diphosphate as cofactor. Mg(2+) serves as cofactor.

The protein resides in the mitochondrion. Its subcellular location is the nucleus. It catalyses the reaction N(6)-[(R)-lipoyl]-L-lysyl-[protein] + 2-oxoglutarate + H(+) = N(6)-[(R)-S(8)-succinyldihydrolipoyl]-L-lysyl-[protein] + CO2. Its activity is regulated as follows. Calcium ions and ADP stimulate, whereas ATP and NADH reduce catalytic activity. 2-oxoglutarate dehydrogenase (E1o) component of the 2-oxoglutarate dehydrogenase complex (OGDHC). Participates in the first step, rate limiting for the overall conversion of 2-oxoglutarate to succinyl-CoA and CO(2) catalyzed by the whole OGDHC. Catalyzes the irreversible decarboxylation of 2-oxoglutarate (alpha-ketoglutarate) via the thiamine diphosphate (ThDP) cofactor and subsequent transfer of the decarboxylated acyl intermediate on an oxidized dihydrolipoyl group that is covalently amidated to the E2 enzyme (dihydrolipoyllysine-residue succinyltransferase or DLST). Plays a key role in the Krebs (citric acid) cycle, which is a common pathway for oxidation of fuel molecules, including carbohydrates, fatty acids, and amino acids. Can catalyze the decarboxylation of 2-oxoadipate in vitro, but at a much lower rate than 2-oxoglutarate. Mainly active in the mitochondrion. A fraction of the 2-oxoglutarate dehydrogenase complex also localizes in the nucleus and is required for lysine succinylation of histones: associates with KAT2A on chromatin and provides succinyl-CoA to histone succinyltransferase KAT2A. In Pongo abelii (Sumatran orangutan), this protein is 2-oxoglutarate dehydrogenase complex component E1.